A 526-amino-acid polypeptide reads, in one-letter code: Cytochrome P450 monooxygeanse terK (526 aa).

A helical membrane pass occupies residues 21-43 (NWGQLTGALLFLAACTWIYLPAF). Cys-465 provides a ligand contact to heme.

This sequence belongs to the cytochrome P450 family. Heme serves as cofactor.

The protein resides in the membrane. The protein operates within secondary metabolite biosynthesis. Its function is as follows. Cytochrome P450 monooxygeanse; part of the gene cluster that mediates the biosynthesis of terpendoles, indole-diterpene (IDT) mycotoxins including terpendole I, terpendole K, terpendole C, as well as the kinesin Eg5 inhibitor terpendole E. Terpendoles biosynthesis begins with the synthesis of geranylgeranyl diphosphate (GGPP) by a yet unidentified GGPP synthase. Condensation of indole-3-glycerol phosphate with GGPP by the prenyltransferase terC then forms 3-geranylgeranylindole (3-GGI), followed by epoxidation and cyclization of this intermediate (by the FAD-dependent monooxygeanse terM and the terpene cyclase terB) to form paspaline. The cytochrome monooxygenase terQ then hydroxylates paspalline at C-11 to yield terpendole E. The cytochrome monooxygenase terP converts terpendole E to 13-desoxyterpendole I, and terQ converts 13-desoxyterpendole I into terpendole I. TerF and terK are required for conversion of terpendole I to terpendole C which is further converted to terpendole K. The polypeptide is Cytochrome P450 monooxygeanse terK (Tolypocladium album (Soil fungus)).